We begin with the raw amino-acid sequence, 425 residues long: 3-deoxy-D-manno-octulosonic acid transferase (425 aa).

Residues 3–23 (ELLYTALLYLIQPLIWIRLWV) form a helical; Signal-anchor membrane-spanning segment. Catalysis depends on Glu60, which acts as the Proton acceptor. CMP contacts are provided by residues 268-269 (PR), 309-311 (MGE), and 335-338 (NPLE).

Belongs to the glycosyltransferase group 1 family. Glycosyltransferase 30 subfamily.

The protein resides in the cell inner membrane. It catalyses the reaction lipid IVA (E. coli) + CMP-3-deoxy-beta-D-manno-octulosonate = alpha-Kdo-(2-&gt;6)-lipid IVA (E. coli) + CMP + H(+). It carries out the reaction alpha-Kdo-(2-&gt;6)-lipid IVA (E. coli) + CMP-3-deoxy-beta-D-manno-octulosonate = alpha-Kdo-(2-&gt;4)-alpha-Kdo-(2-&gt;6)-lipid IVA (E. coli) + CMP + H(+). Its pathway is glycolipid biosynthesis; KDO(2)-lipid A biosynthesis; KDO(2)-lipid A from CMP-3-deoxy-D-manno-octulosonate and lipid IV(A): step 1/4. It functions in the pathway glycolipid biosynthesis; KDO(2)-lipid A biosynthesis; KDO(2)-lipid A from CMP-3-deoxy-D-manno-octulosonate and lipid IV(A): step 2/4. The protein operates within bacterial outer membrane biogenesis; LPS core biosynthesis. Involved in lipopolysaccharide (LPS) biosynthesis. Catalyzes the transfer of two 3-deoxy-D-manno-octulosonate (Kdo) residues from CMP-Kdo to lipid IV(A), the tetraacyldisaccharide-1,4'-bisphosphate precursor of lipid A. The sequence is that of 3-deoxy-D-manno-octulosonic acid transferase (waaA) from Escherichia coli O157:H7.